A 301-amino-acid chain; its full sequence is Heterogeneous nuclear ribonucleoprotein D-like (301 aa).

The tract at residues 1 to 29 (MEDATEMSGGAEEFAEGSKINASKNQQDD) is disordered. RRM domains are found at residues 30–112 (GKMF…KGKE) and 115–194 (KKVF…QPKE). Disordered stretches follow at residues 194–230 (EVYR…NWNQ) and 269–301 (GYGP…YQPY). Residues 212 to 224 (GGRGGGRGRGRGQ) are compositionally biased toward gly residues.

It localises to the nucleus. It is found in the cytoplasm. In terms of biological role, acts as a transcriptional regulator. Binds DNA and RNA. The protein is Heterogeneous nuclear ribonucleoprotein D-like (HNRNPDL) of Gallus gallus (Chicken).